Reading from the N-terminus, the 211-residue chain is tRNA (guanine-N(7)-)-methyltransferase (211 aa).

S-adenosyl-L-methionine-binding residues include E44, D69, D96, and D118. D118 is an active-site residue. K122 is a substrate binding site. The segment at 124–129 (RHEKRR) is interaction with RNA. Substrate contacts are provided by residues D154 and 191–194 (TEYE).

The protein belongs to the class I-like SAM-binding methyltransferase superfamily. TrmB family.

The catalysed reaction is guanosine(46) in tRNA + S-adenosyl-L-methionine = N(7)-methylguanosine(46) in tRNA + S-adenosyl-L-homocysteine. It participates in tRNA modification; N(7)-methylguanine-tRNA biosynthesis. Its function is as follows. Catalyzes the formation of N(7)-methylguanine at position 46 (m7G46) in tRNA. The chain is tRNA (guanine-N(7)-)-methyltransferase from Streptococcus pneumoniae (strain CGSP14).